Consider the following 152-residue polypeptide: Transcriptional regulator MraZ (152 aa).

2 consecutive SpoVT-AbrB domains span residues 5–52 (ASAI…PIHE) and 81–124 (AHEV…DEQS).

Belongs to the MraZ family. As to quaternary structure, forms oligomers.

Its subcellular location is the cytoplasm. The protein resides in the nucleoid. The sequence is that of Transcriptional regulator MraZ from Shewanella baltica (strain OS195).